Reading from the N-terminus, the 430-residue chain is Tol-Pal system protein TolB (430 aa).

The N-terminal stretch at 1–21 is a signal peptide; it reads MKQALRVAFGFLILWASVLHA.

This sequence belongs to the TolB family. As to quaternary structure, the Tol-Pal system is composed of five core proteins: the inner membrane proteins TolA, TolQ and TolR, the periplasmic protein TolB and the outer membrane protein Pal. They form a network linking the inner and outer membranes and the peptidoglycan layer.

The protein resides in the periplasm. Part of the Tol-Pal system, which plays a role in outer membrane invagination during cell division and is important for maintaining outer membrane integrity. TolB occupies a key intermediary position in the Tol-Pal system because it communicates directly with both membrane-embedded components, Pal in the outer membrane and TolA in the inner membrane. This Shigella dysenteriae serotype 1 (strain Sd197) protein is Tol-Pal system protein TolB.